The primary structure comprises 22 residues: Fuctinin-2 (22 aa).

A disordered region spans residues 1–22; sequence ELPGLPKGEKEQQEAIEHIDEV. Residues 7–22 are compositionally biased toward basic and acidic residues; that stretch reads KGEKEQQEAIEHIDEV.

To human SET/PHAPII protein. In terms of assembly, oligomer.

It is found in the cytoplasm. Its function is as follows. Has a role in the physiological regulation of fucosylation processes. This Rattus norvegicus (Rat) protein is Fuctinin-2.